Here is a 251-residue protein sequence, read N- to C-terminus: Large ribosomal subunit protein uL16m (251 aa).

The transit peptide at 1-29 directs the protein to the mitochondrion; it reads MWRLLSGARAPVLRATLSDSWAAPPARAG.

Belongs to the universal ribosomal protein uL16 family. Component of the mitochondrial ribosome large subunit (39S) which comprises a 16S rRNA and about 50 distinct proteins.

The protein resides in the mitochondrion. The polypeptide is Large ribosomal subunit protein uL16m (MRPL16) (Bos taurus (Bovine)).